Consider the following 671-residue polypeptide: UvrABC system protein C (671 aa).

The segment at 1-20 is disordered; it reads MPHLPDSMSPEAPAGPAPAT. The segment covering 10–20 has biased composition (low complexity); the sequence is PEAPAGPAPAT. Positions 37-115 constitute a GIY-YIG domain; it reads PLPGVYRYFD…IKTLNPKYNI (79 aa). The UVR domain maps to 232–267; sequence RQVMEALEARMMAHAEKLEFEQAAELRNQVAALSNV.

Belongs to the UvrC family. In terms of assembly, interacts with UvrB in an incision complex.

Its subcellular location is the cytoplasm. The UvrABC repair system catalyzes the recognition and processing of DNA lesions. UvrC both incises the 5' and 3' sides of the lesion. The N-terminal half is responsible for the 3' incision and the C-terminal half is responsible for the 5' incision. This chain is UvrABC system protein C, found in Albidiferax ferrireducens (strain ATCC BAA-621 / DSM 15236 / T118) (Rhodoferax ferrireducens).